A 299-amino-acid polypeptide reads, in one-letter code: Bifunctional methyltransferase-like/endonuclease (299 aa).

The segment at 1–80 (MLSSKLLDIN…NLIVSPMQKA (80 aa)) is probable methylated-DNA--protein-cysteine methyltransferase-like. Residues 81–299 (LLEKEVKIIG…GRGDSNPGRD (219 aa)) are endonuclease V. Residues Asp-135 and Asn-197 each contribute to the Mg(2+) site.

The protein in the N-terminal section; belongs to the MGMT family. This sequence in the C-terminal section; belongs to the endonuclease V family. Mg(2+) is required as a cofactor.

Its subcellular location is the cytoplasm. The enzyme catalyses Endonucleolytic cleavage at apurinic or apyrimidinic sites to products with a 5'-phosphate.. In terms of biological role, DNA repair enzyme involved in the repair of deaminated bases. Selectively cleaves double-stranded DNA at the second phosphodiester bond 3' to a deoxyinosine leaving behind the intact lesion on the nicked DNA. This is Bifunctional methyltransferase-like/endonuclease from Nanoarchaeum equitans (strain Kin4-M).